Consider the following 749-residue polypeptide: Activating signal cointegrator 1 complex subunit 2 (749 aa).

The tract at residues 1–26 (MPALPLDQLQITHKDPKTGQPKTSAA) is disordered. Threonine 233 carries the post-translational modification Phosphothreonine. One can recognise a CUE domain in the interval 465–508 (ELDSLISQVKDLLPDLGEGFILACLEHYSYDSEQVINNILEDRL). 2 disordered regions span residues 606-675 (EDEY…QDPA) and 689-749 (LARK…MIPS). Residue serine 625 is modified to Phosphoserine. Residues 649–662 (VQEEEWDEEDEVEE) are compositionally biased toward acidic residues. Composition is skewed to basic and acidic residues over residues 663 to 675 (EAPKPDHFIQDPA) and 711 to 726 (QSRETTQERRKKEANK).

This sequence belongs to the ASCC2 family. Identified in the ASCC complex that contains ASCC1, ASCC2 and ASCC3. Interacts directly with ASCC3. The ASCC complex interacts with ALKBH3. Interacts (via CUE domain) with 'Lys-63'-linked polyubiquitin chains, but not with 'Lys-48'-linked polyubiquitin chains. Part of the ASC-1 complex, that contains TRIP4, ASCC1, ASCC2 and ASCC3. Component of the RQT (ribosome quality control trigger) complex, that contains ASCC2, ASCC3 and TRIP4. Interacts with CSRP1. Interacts with PRPF8, a component of the spliceosome. Interacts with ZCCHC4.

Its subcellular location is the nucleus. It is found in the nucleus speckle. In terms of biological role, ubiquitin-binding protein involved in DNA repair and rescue of stalled ribosomes. Plays a role in DNA damage repair as component of the ASCC complex. Recruits ASCC3 and ALKBH3 to sites of DNA damage by binding to polyubiquitinated proteins that have 'Lys-63'-linked polyubiquitin chains. Part of the ASC-1 complex that enhances NF-kappa-B, SRF and AP1 transactivation. Involved in activation of the ribosome quality control (RQC) pathway, a pathway that degrades nascent peptide chains during problematic translation. Specifically recognizes and binds RPS20/uS10 ubiquitinated by ZNF598, promoting recruitment of the RQT (ribosome quality control trigger) complex on stalled ribosomes, followed by disassembly of stalled ribosomes. The sequence is that of Activating signal cointegrator 1 complex subunit 2 (Ascc2) from Mus musculus (Mouse).